A 553-amino-acid chain; its full sequence is Methyl-coenzyme M reductase II subunit alpha (553 aa).

Residue Gln-150 participates in coenzyme F430 binding. Coenzyme B contacts are provided by residues Arg-228, 259 to 260 (KH), and Arg-273. A Pros-methylhistidine modification is found at His-260. Arg-274 is subject to 5-methylarginine. A coenzyme M-binding site is contributed by Tyr-335. A 2-methylglutamine modification is found at Gln-402. Position 446 (Tyr-446) interacts with coenzyme M. Gly-447 is subject to 1-thioglycine. At Asp-452 the chain carries (Z)-2,3-didehydroaspartate. S-methylcysteine is present on Cys-454.

Belongs to the methyl-coenzyme M reductase alpha subunit family. MCR is a hexamer of two alpha, two beta, and two gamma chains, forming a dimer of heterotrimers. Coenzyme F430 serves as cofactor. In terms of processing, the alpha subunit contains six modified amino acids near the active site region. Is methylated on His-260, Arg-274, Gln-402 and Cys-454, probably by the action of specific S-adenosylmethionine-dependent methyltransferases. Also contains a thioglycine at position 447, forming a thiopeptide bond. Contains a didehydroaspartate residue at position 452. The methylation on C5 of Arg-274 is a post-translational methylation not essential in vivo, but which plays a role for the stability and structural integrity of MCR.

It catalyses the reaction coenzyme B + methyl-coenzyme M = methane + coenzyme M-coenzyme B heterodisulfide. It functions in the pathway one-carbon metabolism; methyl-coenzyme M reduction; methane from methyl-coenzyme M: step 1/1. Its function is as follows. Component of the methyl-coenzyme M reductase (MCR) I that catalyzes the reductive cleavage of methyl-coenzyme M (CoM-S-CH3 or 2-(methylthio)ethanesulfonate) using coenzyme B (CoB or 7-mercaptoheptanoylthreonine phosphate) as reductant which results in the production of methane and the mixed heterodisulfide of CoB and CoM (CoM-S-S-CoB). This is the final step in methanogenesis. This Methanothermobacter thermautotrophicus (strain ATCC 29096 / DSM 1053 / JCM 10044 / NBRC 100330 / Delta H) (Methanobacterium thermoautotrophicum) protein is Methyl-coenzyme M reductase II subunit alpha (mrtA).